We begin with the raw amino-acid sequence, 494 residues long: MAYRDLRDFITQLEHLGELKRVQAEVSPYLEMTALCDRTLRAGGPALLFENPTGHNTPVLGNLFGTTRRVALGMGVNDVSELRQFGHVLASLKEPEAPKGFKELMGLGSLVKTLWAMAPKELRSAPCQEIIWEGADVDLARLPIQHCWPGDVAPLITWGLVITQGPHKARQNLGIYRQQVLARNKVIMRWLAQRGGALDFKEHAALNPGQPYPVCVALGADPATILGAVTPVPDSLSEYQFAGLLRGSRTELVKALGSELRVPAFAEIVLEGHIYPDATHASGFEHALEGPFGDHTGYYNEQDWFPVFTIDRITQRRDPIYHSTYTGKPPDEPAMLALALNELFVPLLQRQYPEITDFYLPPEGCSYRLAVVQIKKSYPGHARRVMFGIWSFLRQFMYTKFIVVVDDDVNIRDWKDVIWAITTRVDPTRDTLLADSTPIDYLDFASPVSGLGSKMGLDATNKWPGETSREWGRPLTMSADVTARVEQVWQTLGL.

Asn-172 is a Mn(2+) binding site. Prenylated FMN contacts are provided by residues 175–177, 189–191, and 194–195; these read IYR, RWL, and RG. Position 238 (Glu-238) interacts with Mn(2+). Residue Asp-294 is the Proton donor of the active site.

This sequence belongs to the UbiD family. Homohexamer. The cofactor is prenylated FMN. It depends on Mn(2+) as a cofactor.

The protein localises to the cell membrane. It carries out the reaction a 4-hydroxy-3-(all-trans-polyprenyl)benzoate + H(+) = a 2-(all-trans-polyprenyl)phenol + CO2. It functions in the pathway cofactor biosynthesis; ubiquinone biosynthesis. Catalyzes the decarboxylation of 3-octaprenyl-4-hydroxy benzoate to 2-octaprenylphenol, an intermediate step in ubiquinone biosynthesis. In Albidiferax ferrireducens (strain ATCC BAA-621 / DSM 15236 / T118) (Rhodoferax ferrireducens), this protein is 3-octaprenyl-4-hydroxybenzoate carboxy-lyase.